Here is a 307-residue protein sequence, read N- to C-terminus: UPF0276 protein HI_1600 (307 aa).

It belongs to the UPF0276 family.

In Haemophilus influenzae (strain ATCC 51907 / DSM 11121 / KW20 / Rd), this protein is UPF0276 protein HI_1600.